The chain runs to 127 residues: Aspartate 1-decarboxylase (127 aa).

The active-site Schiff-base intermediate with substrate; via pyruvic acid is Ser-25. Residue Ser-25 is modified to Pyruvic acid (Ser). Residue Thr-57 coordinates substrate. Tyr-58 functions as the Proton donor in the catalytic mechanism. 73–75 lines the substrate pocket; that stretch reads GAA.

Belongs to the PanD family. As to quaternary structure, heterooctamer of four alpha and four beta subunits. Pyruvate is required as a cofactor. Post-translationally, is synthesized initially as an inactive proenzyme, which is activated by self-cleavage at a specific serine bond to produce a beta-subunit with a hydroxyl group at its C-terminus and an alpha-subunit with a pyruvoyl group at its N-terminus.

The protein resides in the cytoplasm. It catalyses the reaction L-aspartate + H(+) = beta-alanine + CO2. It participates in cofactor biosynthesis; (R)-pantothenate biosynthesis; beta-alanine from L-aspartate: step 1/1. Catalyzes the pyruvoyl-dependent decarboxylation of aspartate to produce beta-alanine. The sequence is that of Aspartate 1-decarboxylase from Bacillus cereus (strain ATCC 10987 / NRS 248).